The chain runs to 162 residues: MFRAIAIIRAHEVIDAVPASHIVLERDERHLRRKAITLENGEKILADFAEPVVLEHGDRLVLDDGREIEIRAASEELYEIRGRDPRHIAELAWHIGNRHLAAQIETDRIFILRDHVIRVMLEGLGATVTDVVAIFSPLRGAYSGGHQHHHGHDHDHHHPDHE.

The segment at 143-162 (SGGHQHHHGHDHDHHHPDHE) is disordered. Residues 152 to 162 (HDHDHHHPDHE) show a composition bias toward basic and acidic residues.

Belongs to the UreE family.

It localises to the cytoplasm. Its function is as follows. Involved in urease metallocenter assembly. Binds nickel. Probably functions as a nickel donor during metallocenter assembly. The polypeptide is Urease accessory protein UreE 1 (Brucella suis biovar 1 (strain 1330)).